We begin with the raw amino-acid sequence, 579 residues long: uncharacterized protein (579 aa).

The GGDEF domain maps to 449 to 577; the sequence is QKGVFILVDI…GKNRLMIHDS (129 aa).

This is an uncharacterized protein from Bacillus subtilis (strain 168).